The chain runs to 507 residues: Tryptophan aminotransferase-related protein 2 (507 aa).

Residues 91–135 (PPPHHHHHDAGLATRSSDAAVHRRARTASSMAPSTGKPAVTTDSV) are disordered. Pyridoxal 5'-phosphate contacts are provided by residues Tyr-169, 211-212 (ST), Asn-282, 304-307 (DLAY), 327-330 (TVSK), and Arg-338. Lys-330 is subject to N6-(pyridoxal phosphate)lysine.

Belongs to the alliinase family. Pyridoxal 5'-phosphate is required as a cofactor. In terms of tissue distribution, widely expressed.

The catalysed reaction is L-tryptophan + 2-oxoglutarate = indole-3-pyruvate + L-glutamate. The protein operates within plant hormone metabolism; auxin biosynthesis. Probable tryptophan aminotransferase involved in auxin (IAA) biosynthesis. Required for auxin production to initiate multiple change in growth in response to environmental and developmental cues. Functions upstream of YUCCA1 in auxin biosynthesis. Required for polar auxin transport. The chain is Tryptophan aminotransferase-related protein 2 from Oryza sativa subsp. japonica (Rice).